The chain runs to 724 residues: Solute carrier organic anion transporter family member 4C1 (724 aa).

Residues 1-105 (MKSAKGIENL…QCLQRCNTPG (105 aa)) lie on the Cytoplasmic side of the membrane. 5 positions are modified to phosphoserine: serine 15, serine 16, serine 24, serine 26, and serine 28. The tract at residues 24 to 71 (SASPSQVEVSALSSDPQRENSQPQELQKPQEPQKSPEPSLPSAPPNVS) is disordered. Positions 25 to 38 (ASPSQVEVSALSSD) are enriched in polar residues. The span at 44-60 (SQPQELQKPQEPQKSPE) shows a compositional bias: low complexity. The helical transmembrane segment at 106–126 (GFLLHYCLLAVTQGIVVNGLV) threads the bilayer. The Extracellular portion of the chain corresponds to 127–145 (NISISTIEKRYEMKSSLTG). A helical membrane pass occupies residues 146-166 (LISSSYDISFCLLSLFVSFFG). Over 167-172 (ERGHKP) the chain is Cytoplasmic. A helical membrane pass occupies residues 173 to 197 (RWLAFAAFMIGLGALVFSLPQFFSG). Topologically, residues 198 to 224 (EYKLGSLFEDTCVTTRNSTSCTSSTSS) are extracellular. A helical membrane pass occupies residues 225 to 254 (LSNYLYVFILGQLLLGAGGTPLYTLGTAFL). Topologically, residues 255 to 274 (DDSVPTHKSSLYIGTGYAMS) are cytoplasmic. The chain crosses the membrane as a helical span at residues 275–295 (ILGPAIGYVLGGQLLTIYVDV). The Extracellular portion of the chain corresponds to 296-311 (AMGESTDITEDDPRWL). A helical transmembrane segment spans residues 312–336 (GAWWIGFLLSWIFAWSLIIPFSCFP). Residues 337–377 (KHLPGTAEIQAGKTSQAHQSNSNADAKFGKSIKDFPAALKN) are Cytoplasmic-facing. A helical transmembrane segment spans residues 378–399 (LMKNAVFMCLVLSTSSEALITT). The Extracellular segment spans residues 400-419 (GFATFLPKFIENQFGLTSSF). The chain crosses the membrane as a helical span at residues 420–443 (AATLGGAVLIPGAALGQILGGFLV). The Cytoplasmic portion of the chain corresponds to 444-447 (SKFK). Residues 448–471 (MTCKNTMKFALFTSGVALTLSFVF) form a helical membrane-spanning segment. Residues 472–580 (IYAKCGNEPF…ETHCAKLPIF (109 aa)) lie on the Extracellular side of the membrane. The Kazal-like domain maps to 495 to 549 (GNLIAPCNANCNCLRSYYYPVCGDGVQYFSPCFAGCSNSVAHRKPKVYYNCSCIE). Disulfide bonds link cysteine 501/cysteine 530, cysteine 507/cysteine 526, and cysteine 516/cysteine 547. The chain crosses the membrane as a helical span at residues 581 to 603 (LCIFFIVIIFTFMAGTPITVSIL). Over 604–612 (RCVNHRQRS) the chain is Cytoplasmic. The chain crosses the membrane as a helical span at residues 613 to 638 (LALGIQFMVLRLLGTIPGPIIFGFTI). The Extracellular portion of the chain corresponds to 639–672 (DSTCILWDINDCGIKGACRIYDNIKMAHMLVAIS). Residues 673–690 (VTCKVITMFFNGFAIFLY) traverse the membrane as a helical segment. Residues 691 to 724 (KPPPSATDLSFHKENAVVTNVLAEQDLNKIVKEG) are Cytoplasmic-facing.

It belongs to the organo anion transporter (TC 2.A.60) family.

The protein localises to the basolateral cell membrane. It catalyses the reaction estrone 3-sulfate(out) = estrone 3-sulfate(in). The catalysed reaction is L-thyroxine(out) = L-thyroxine(in). The enzyme catalyses 3,3',5-triiodo-L-thyronine(out) = 3,3',5-triiodo-L-thyronine(in). It carries out the reaction chenodeoxycholate(out) = chenodeoxycholate(in). It catalyses the reaction glycocholate(out) = glycocholate(in). The catalysed reaction is L-homoarginine(in) = L-homoarginine(out). The enzyme catalyses L-arginine(in) = L-arginine(out). It carries out the reaction N(omega),N(omega)-dimethyl-L-arginine(out) = N(omega),N(omega)-dimethyl-L-arginine(in). Functionally, mediates the transport of organic anions such as steroids (estrone 3-sulfate, chenodeoxycholate, glycocholate) and thyroid hormones (3,3',5-triiodo-L-thyronine (T3), L-thyroxine (T4)), in the kidney. Capable of transporting cAMP and pharmacological substances such as digoxin, ouabain and methotrexate. Transport is independent of sodium, chloride ion, and ATP. Transport activity is stimulated by an acidic extracellular environment due to increased substrate affinity to the transporter. The driving force for this transport activity is currently not known. The role of hydrogencarbonate (HCO3(-), bicarbonate) as the probable counteranion that exchanges for organic anions is still not well defined. Functions as an uptake transporter at the apical membrane, suggesting a role in renal reabsorption. Involved in the renal secretion of the uremic toxin ADMA (N(omega),N(omega)-dimethyl-L-arginine or asymmetrical dimethylarginine), which is associated to cardiovascular events and mortality, and the structurally related amino acids L-arginine and L-homoarginine (a cardioprotective biomarker). Can act bidirectionally, suggesting a dual protective role of this transport protein; exporting L-homoarginine after being synthesized in proximal tubule cells, and mediating uptake of ADMA from the blood into proximal tubule cells where it is degraded by the enzyme dimethylarginine dimethylaminohydrolase 1 (DDAH1). May be involved in sperm maturation by enabling directed movement of organic anions and compounds within or between cells. This ion-transporting process is important to maintain the strict epididymal homeostasis necessary for sperm maturation. May have a role in secretory functions since seminal vesicle epithelial cells are assumed to secrete proteins involved in decapacitation by modifying surface proteins to facilitate the acquisition of the ability to fertilize the egg. In Pongo abelii (Sumatran orangutan), this protein is Solute carrier organic anion transporter family member 4C1.